The following is a 58-amino-acid chain: Alpha-conotoxin-like Pu1.6 (58 aa).

Residues 1–17 form the signal peptide; that stretch reads MFTVFLLVVLVTTVVFS. A propeptide spanning residues 18-35 is cleaved from the precursor; sequence TSDHRPASNHENRRASKR. Cystine bridges form between Cys44–Cys50 and Cys45–Cys58. The interval 46 to 48 is lacks the Ser-Xaa-Pro motif that is crucial for potent interaction with nAChR; that stretch reads TNP.

It belongs to the conotoxin A superfamily. In terms of tissue distribution, expressed by the venom duct.

It localises to the secreted. Its function is as follows. Alpha-conotoxins act on postsynaptic membranes, they bind to the nicotinic acetylcholine receptors (nAChR) and thus inhibit them. Has possibly a distinct nAChR binding mode from other alpha-conotoxins, due to a different three residue motif (lacks the Ser-Xaa-Pro motif). In Conus pulicarius (Flea-bitten cone), this protein is Alpha-conotoxin-like Pu1.6.